Here is a 453-residue protein sequence, read N- to C-terminus: UDP-glycosyltransferase 76E1 (453 aa).

UDP-alpha-D-glucose-binding positions include Ser-272, 331–333 (APQ), 348–356 (HCGWNSTLE), and 370–373 (TGDQ).

It belongs to the UDP-glycosyltransferase family.

Its function is as follows. Possesses low quercetin 3-O-glucosyltransferase and 7-O-glucosyltransferase activities in vitro. The sequence is that of UDP-glycosyltransferase 76E1 (UGT76E1) from Arabidopsis thaliana (Mouse-ear cress).